Consider the following 256-residue polypeptide: Cell division protein ZipA (256 aa).

Residues methionine 1–glutamine 6 are Periplasmic-facing. Residues isoleucine 7–serine 27 traverse the membrane as a helical segment. The Cytoplasmic portion of the chain corresponds to tyrosine 28–threonine 256.

It belongs to the ZipA family. As to quaternary structure, interacts with FtsZ via their C-terminal domains.

It localises to the cell inner membrane. Functionally, essential cell division protein that stabilizes the FtsZ protofilaments by cross-linking them and that serves as a cytoplasmic membrane anchor for the Z ring. Also required for the recruitment to the septal ring of downstream cell division proteins. This chain is Cell division protein ZipA, found in Baumannia cicadellinicola subsp. Homalodisca coagulata.